Reading from the N-terminus, the 117-residue chain is Glycine cleavage system H-like protein (117 aa).

One can recognise a Lipoyl-binding domain in the interval 21-103 (IVKLGLSSQM…ESEGWFVVLQ (83 aa)). Lys-62 is modified (N6-lipoyllysine).

This sequence belongs to the GcvH family. (R)-lipoate is required as a cofactor.

The polypeptide is Glycine cleavage system H-like protein (Chlamydia trachomatis serovar D (strain ATCC VR-885 / DSM 19411 / UW-3/Cx)).